Here is a 492-residue protein sequence, read N- to C-terminus: SH2 domain-containing adapter protein E (492 aa).

Disordered regions lie at residues 46–193 (TASE…DKAK), 214–236 (KRTKGQRDAERVGENDGYMEPYD), 260–332 (LDGP…EQPW), and 347–384 (FEGSDRPPGREDAGRPHHWQKTLKPTLSDHGDGEKVDP). S103 carries the post-translational modification Phosphoserine. A compositionally biased stretch (basic and acidic residues) spans 149-158 (IKVDTQEKNG). Over residues 168 to 184 (TSSSSSSSSSASSSPSS) the composition is skewed to low complexity. Basic and acidic residues-rich tracts occupy residues 214-227 (KRTKGQRDAERVGE), 268-285 (ETVKVEATAKRRSSKDLL), 306-332 (AEVKTRPADSRLPEEDDRPAAEYEQPW), 349-361 (GSDRPPGREDAGR), and 373-383 (LSDHGDGEKVD). The region spanning 393–488 (WYHGSISRAE…AEHMTLLHPV (96 aa)) is the SH2 domain.

In terms of tissue distribution, expressed in heart, brain, lung and skeletal muscle.

This Mus musculus (Mouse) protein is SH2 domain-containing adapter protein E (She).